Here is a 521-residue protein sequence, read N- to C-terminus: Histone deacetylase HDAC1 (521 aa).

Positions 7 to 319 are histone deacetylase; it reads KRVCYYYDSD…WTYETSVALA (313 aa). The active site involves H139. The disordered stretch occupies residues 376–521; sequence GVQIQAIPED…GAKGAKENNI (146 aa). Residues 386-395 are compositionally biased toward acidic residues; it reads AINDESDDED. Residue S391 is modified to Phosphoserine. Residues 396–414 show a composition bias toward basic and acidic residues; the sequence is KVDKDDRLPQSDKDKRIVP. Phosphoserine is present on residues S419, S421, and S455. Phosphothreonine is present on T457. Basic and acidic residues predominate over residues 459 to 470; that stretch reads SEIKDEKEKGDG. Residues 476–502 are compositionally biased toward low complexity; the sequence is STASNTNSNNNSNNKSDNDAGATANAG. Positions 503–513 are enriched in gly residues; it reads SGSGSGSGAGA.

This sequence belongs to the histone deacetylase family. HD type 1 subfamily. As to quaternary structure, component of a form of the Esc/E(z) complex present specifically during early embryogenesis which is composed of Caf1-55, esc, E(z), Su(z)12, Pcl and HDAC1. The Esc/E(z) complex may also associate with Pcl and HDAC1 during early embryogenesis. This complex is distinct from the PRC1 complex, which contains many other PcG proteins like Pc, Ph, Psc, Su(z)2. The 2 complexes however cooperate and interact together during the first 3 hours of development to establish PcG silencing. Interacts with the histone methyltransferase Su(var)3-9. Component of a complex that contains at least HDAC1, CoRest and Su(var)3-3/Hdm. Component of the DREAM complex at least composed of Myb, Caf1-55, mip40, mip120, mip130, E2f2, Dp, Rbf, Rbf2, lin-52, HDAC1 and l(3)mbt. Interacts with the chromatin-remodeler Mi-2. Interacts with Rrp6.

Its subcellular location is the nucleus. The catalysed reaction is N(6)-acetyl-L-lysyl-[histone] + H2O = L-lysyl-[histone] + acetate. In terms of biological role, catalyzes the deacetylation of lysine residues on the N-terminal part of the core histones (H2A, H2B, H3 and H4). Histone deacetylation may constitute a tag for epigenetic repression and plays an important role in transcriptional regulation, cell cycle progression and developmental events. For instance, deacetylation of histone H3 may be a prerequisite for the subsequent recruitment of the histone methyltransferase Su(var)3-9 to histones. Involved in position-effect variegation (PEV). In the larval brain, part of a regulatory network including the transcriptional repressors klu, dpn and E(spl)mgamma-HLH which is required for type II neuroblast self-renewal and for maintaining erm in an inactive state in intermediate neural progenitors (INP). In Drosophila melanogaster (Fruit fly), this protein is Histone deacetylase HDAC1.